The chain runs to 299 residues: ATP phosphoribosyltransferase (299 aa).

The protein belongs to the ATP phosphoribosyltransferase family. Long subfamily. In terms of assembly, equilibrium between an active dimeric form, an inactive hexameric form and higher aggregates. Interconversion between the various forms is largely reversible and is influenced by the natural substrates and inhibitors of the enzyme. Requires Mg(2+) as cofactor.

The protein resides in the cytoplasm. The catalysed reaction is 1-(5-phospho-beta-D-ribosyl)-ATP + diphosphate = 5-phospho-alpha-D-ribose 1-diphosphate + ATP. Its pathway is amino-acid biosynthesis; L-histidine biosynthesis; L-histidine from 5-phospho-alpha-D-ribose 1-diphosphate: step 1/9. Its activity is regulated as follows. Feedback inhibited by histidine. Its function is as follows. Catalyzes the condensation of ATP and 5-phosphoribose 1-diphosphate to form N'-(5'-phosphoribosyl)-ATP (PR-ATP). Has a crucial role in the pathway because the rate of histidine biosynthesis seems to be controlled primarily by regulation of HisG enzymatic activity. In Buchnera aphidicola subsp. Schizaphis graminum (strain Sg), this protein is ATP phosphoribosyltransferase (hisG).